The primary structure comprises 500 residues: Aspartyl/glutamyl-tRNA(Asn/Gln) amidotransferase subunit B (500 aa).

It belongs to the GatB/GatE family. GatB subfamily. Heterotrimer of A, B and C subunits.

The catalysed reaction is L-glutamyl-tRNA(Gln) + L-glutamine + ATP + H2O = L-glutaminyl-tRNA(Gln) + L-glutamate + ADP + phosphate + H(+). The enzyme catalyses L-aspartyl-tRNA(Asn) + L-glutamine + ATP + H2O = L-asparaginyl-tRNA(Asn) + L-glutamate + ADP + phosphate + 2 H(+). Allows the formation of correctly charged Asn-tRNA(Asn) or Gln-tRNA(Gln) through the transamidation of misacylated Asp-tRNA(Asn) or Glu-tRNA(Gln) in organisms which lack either or both of asparaginyl-tRNA or glutaminyl-tRNA synthetases. The reaction takes place in the presence of glutamine and ATP through an activated phospho-Asp-tRNA(Asn) or phospho-Glu-tRNA(Gln). The polypeptide is Aspartyl/glutamyl-tRNA(Asn/Gln) amidotransferase subunit B (Brucella anthropi (strain ATCC 49188 / DSM 6882 / CCUG 24695 / JCM 21032 / LMG 3331 / NBRC 15819 / NCTC 12168 / Alc 37) (Ochrobactrum anthropi)).